Here is a 552-residue protein sequence, read N- to C-terminus: ATP synthase subunit alpha, mitochondrial (552 aa).

A mitochondrion-targeting transit peptide spans 1-47; sequence MSIFSARLASSVARNLPKAANQVACKAAYPAASLAARKLHVASTQRS. 211–218 lines the ATP pocket; sequence GDRQTGKT.

It belongs to the ATPase alpha/beta chains family. F-type ATPases have 2 components, CF(1) - the catalytic core - and CF(0) - the membrane proton channel. CF(1) has five subunits: alpha(3), beta(3), gamma(1), delta(1), epsilon(1). CF(0) has three main subunits: a, b and c.

The protein resides in the mitochondrion inner membrane. In terms of biological role, mitochondrial membrane ATP synthase (F(1)F(0) ATP synthase or Complex V) produces ATP from ADP in the presence of a proton gradient across the membrane which is generated by electron transport complexes of the respiratory chain. F-type ATPases consist of two structural domains, F(1) - containing the extramembraneous catalytic core, and F(0) - containing the membrane proton channel, linked together by a central stalk and a peripheral stalk. During catalysis, ATP synthesis in the catalytic domain of F(1) is coupled via a rotary mechanism of the central stalk subunits to proton translocation. Subunits alpha and beta form the catalytic core in F(1). Rotation of the central stalk against the surrounding alpha(3)beta(3) subunits leads to hydrolysis of ATP in three separate catalytic sites on the beta subunits. Subunit alpha does not bear the catalytic high-affinity ATP-binding sites. The chain is ATP synthase subunit alpha, mitochondrial (blw) from Drosophila melanogaster (Fruit fly).